The primary structure comprises 335 residues: Glyceraldehyde-3-phosphate dehydrogenase (335 aa).

Residues 10-11, D31, R75, and T122 each bind NAD(+); that span reads RI. Residues 152-154 and T183 contribute to the D-glyceraldehyde 3-phosphate site; that span reads SCT. The active-site Nucleophile is the C153. An NAD(+)-binding site is contributed by N184. D-glyceraldehyde 3-phosphate-binding positions include R198, 211–212, and R234; that span reads TG. N318 provides a ligand contact to NAD(+).

Belongs to the glyceraldehyde-3-phosphate dehydrogenase family. Homotetramer.

Its subcellular location is the cytoplasm. It catalyses the reaction D-glyceraldehyde 3-phosphate + phosphate + NAD(+) = (2R)-3-phospho-glyceroyl phosphate + NADH + H(+). The protein operates within carbohydrate degradation; glycolysis; pyruvate from D-glyceraldehyde 3-phosphate: step 1/5. Its function is as follows. Catalyzes the oxidative phosphorylation of glyceraldehyde 3-phosphate (G3P) to 1,3-bisphosphoglycerate (BPG) using the cofactor NAD. The first reaction step involves the formation of a hemiacetal intermediate between G3P and a cysteine residue, and this hemiacetal intermediate is then oxidized to a thioester, with concomitant reduction of NAD to NADH. The reduced NADH is then exchanged with the second NAD, and the thioester is attacked by a nucleophilic inorganic phosphate to produce BPG. This is Glyceraldehyde-3-phosphate dehydrogenase (gap) from Borreliella burgdorferi (strain ATCC 35210 / DSM 4680 / CIP 102532 / B31) (Borrelia burgdorferi).